The primary structure comprises 647 residues: Threonine--tRNA ligase (647 aa).

The 61-residue stretch at 1–61 (MIKITFPDGA…TEDGAIEIVT (61 aa)) folds into the TGS domain. A catalytic region spans residues 242–540 (DHRKLGKELD…LIENYKGAFP (299 aa)). Residues C336, H387, and H517 each coordinate Zn(2+).

The protein belongs to the class-II aminoacyl-tRNA synthetase family. Homodimer. Requires Zn(2+) as cofactor.

The protein resides in the cytoplasm. The enzyme catalyses tRNA(Thr) + L-threonine + ATP = L-threonyl-tRNA(Thr) + AMP + diphosphate + H(+). Catalyzes the attachment of threonine to tRNA(Thr) in a two-step reaction: L-threonine is first activated by ATP to form Thr-AMP and then transferred to the acceptor end of tRNA(Thr). Also edits incorrectly charged L-seryl-tRNA(Thr). The sequence is that of Threonine--tRNA ligase from Streptococcus sanguinis (strain SK36).